We begin with the raw amino-acid sequence, 785 residues long: Penicillin-binding protein 1A (785 aa).

Positions 1 to 61 (MPPDDRLTAV…SGPGGPSGPG (61 aa)) are disordered. The segment covering 33–45 (SPPPKPPPPPPPG) has biased composition (pro residues). Gly residues predominate over residues 46-59 (RGGGGPSGPGGPSG). Residues 77–97 (IAVAVMVLLPLITFGMAYMIV) traverse the membrane as a helical segment. A transglycosylase region spans residues 118–299 (GSEIARIVPP…RWNWVLDGMV (182 aa)). The active-site Proton donor; for transglycosylase activity is the Glu151. Residues 392–662 (AVVSIDPRTG…EGVKPLVNKW (271 aa)) form a transpeptidase region. The active-site Acyl-ester intermediate; for transpeptidase activity is the Ser426. Disordered regions lie at residues 605-626 (SRGH…VQLG), 690-726 (ESFP…QPSV), and 738-785 (GITI…PPPP). Composition is skewed to pro residues over residues 708–721 (PAAP…PTDP) and 743–758 (IGPP…PGAP). The span at 759 to 775 (GAPVGPGAPEVPVAPGA) shows a compositional bias: low complexity.

It is found in the cell membrane. The enzyme catalyses [GlcNAc-(1-&gt;4)-Mur2Ac(oyl-L-Ala-gamma-D-Glu-L-Lys-D-Ala-D-Ala)](n)-di-trans,octa-cis-undecaprenyl diphosphate + beta-D-GlcNAc-(1-&gt;4)-Mur2Ac(oyl-L-Ala-gamma-D-Glu-L-Lys-D-Ala-D-Ala)-di-trans,octa-cis-undecaprenyl diphosphate = [GlcNAc-(1-&gt;4)-Mur2Ac(oyl-L-Ala-gamma-D-Glu-L-Lys-D-Ala-D-Ala)](n+1)-di-trans,octa-cis-undecaprenyl diphosphate + di-trans,octa-cis-undecaprenyl diphosphate + H(+). It catalyses the reaction Preferential cleavage: (Ac)2-L-Lys-D-Ala-|-D-Ala. Also transpeptidation of peptidyl-alanyl moieties that are N-acyl substituents of D-alanine.. Its pathway is cell wall biogenesis; peptidoglycan biosynthesis. Cell wall formation. Synthesis of cross-linked peptidoglycan from the lipid intermediates. The enzyme has a penicillin-insensitive transglycosylase N-terminal domain (formation of linear glycan strands) and a penicillin-sensitive transpeptidase C-terminal domain (cross-linking of the peptide subunits). The protein is Penicillin-binding protein 1A (ponA1) of Mycolicibacterium smegmatis (strain ATCC 700084 / mc(2)155) (Mycobacterium smegmatis).